The sequence spans 331 residues: Tetraacyldisaccharide 4'-kinase (331 aa).

58 to 65 (TVGGSGKT) is a binding site for ATP.

The protein belongs to the LpxK family.

The catalysed reaction is a lipid A disaccharide + ATP = a lipid IVA + ADP + H(+). It participates in glycolipid biosynthesis; lipid IV(A) biosynthesis; lipid IV(A) from (3R)-3-hydroxytetradecanoyl-[acyl-carrier-protein] and UDP-N-acetyl-alpha-D-glucosamine: step 6/6. In terms of biological role, transfers the gamma-phosphate of ATP to the 4'-position of a tetraacyldisaccharide 1-phosphate intermediate (termed DS-1-P) to form tetraacyldisaccharide 1,4'-bis-phosphate (lipid IVA). This Shewanella denitrificans (strain OS217 / ATCC BAA-1090 / DSM 15013) protein is Tetraacyldisaccharide 4'-kinase.